The primary structure comprises 1956 residues: Histone-lysine N-methyltransferase SETD1B (1956 aa).

Positions 1–20 (MSFKEAKPGERGKNPEDHGR) are enriched in basic and acidic residues. Residues 1-46 (MSFKEAKPGERGKNPEDHGRKQTASWINGMEAGNQPSTSGEKKSHH) are disordered. The RRM domain maps to 111–199 (DEFYVGPVPP…NIIHVELDTK (89 aa)). 9 disordered regions span residues 226 to 478 (LDAS…LEAE), 502 to 637 (IAGD…VTPS), 662 to 696 (GFPP…VTVP), 926 to 1148 (KEPP…DEMQ), 1341 to 1386 (EDLP…TLTS), 1420 to 1464 (PTFP…VPSP), 1512 to 1553 (HLTS…NYET), 1627 to 1655 (TKHK…FSPP), and 1766 to 1790 (IDTQ…RRSE). Composition is skewed to polar residues over residues 254–290 (VTPN…QGTP), 298–312 (PFSQ…QTTP), and 346–361 (SSGS…NVTR). Residues 363-373 (QPEPVQVPRTP) are compositionally biased toward pro residues. 3 stretches are compositionally biased toward polar residues: residues 375-407 (LSHS…PQTS), 416-432 (GPQT…NSAS), and 451-464 (DSTT…SQTP). Residues 517–527 (SPISSSSSQLS) are compositionally biased toward low complexity. Polar residues-rich tracts occupy residues 535–551 (GSRY…SSTG) and 575–593 (SLCQ…NQSG). The segment covering 594–605 (RKTESLDKKELV) has biased composition (basic and acidic residues). Residues 625-634 (EDMEISDDEV) show a composition bias toward acidic residues. Residues 986-1000 (SEGEEEVESEGDDGE) are compositionally biased toward acidic residues. Positions 1001–1011 (TSDKEDSSSEK) are enriched in basic and acidic residues. Residues 1068–1122 (DSSDESEESSEYESSSDSDEKEEEDDEEEELVFGDDQSEDQDLGQEYEVETDREE) are compositionally biased toward acidic residues. A compositionally biased stretch (basic and acidic residues) spans 1341 to 1352 (EDLPRTPGRDIV). Composition is skewed to polar residues over residues 1358–1367 (LGKSQSTETV) and 1450–1462 (EPTS…NSVP). The span at 1541–1551 (SAHEFETEKNY) shows a compositional bias: basic and acidic residues. Over residues 1628–1638 (KHKKSRNSRHN) the composition is skewed to basic residues. Polar residues predominate over residues 1769–1783 (QGKSIPAQPQASTRA). Residues 1788-1793 (RSEQRR) carry the RxxxRR motif motif. Positions 1817-1934 (KKLRFCKSHI…VNEEITYDYK (118 aa)) constitute an SET domain. Residue Y1933 coordinates S-adenosyl-L-methionine. Residues 1940–1956 (VKIPCLCGAENCRGTLN) enclose the Post-SET domain.

This sequence belongs to the class V-like SAM-binding methyltransferase superfamily. In terms of assembly, component of the SET1B/COMPASS complex.

It localises to the nucleus speckle. Its subcellular location is the chromosome. The enzyme catalyses L-lysyl(4)-[histone H3] + 3 S-adenosyl-L-methionine = N(6),N(6),N(6)-trimethyl-L-lysyl(4)-[histone H3] + 3 S-adenosyl-L-homocysteine + 3 H(+). Its function is as follows. Histone methyltransferase that specifically methylates 'Lys-4' of histone H3, when part of the SET1 histone methyltransferase (HMT) complex, but not if the neighboring 'Lys-9' residue is already methylated. H3 'Lys-4' methylation represents a specific tag for epigenetic transcriptional activation. The sequence is that of Histone-lysine N-methyltransferase SETD1B (setd1b) from Xenopus tropicalis (Western clawed frog).